A 475-amino-acid polypeptide reads, in one-letter code: Melanopsin (475 aa).

The Extracellular portion of the chain corresponds to 1–21 (MGTQHRIKVDVPDRVLYTVGS). A helical transmembrane segment spans residues 22-42 (CVLVIGSIGITGNLLVLYAFY). Topologically, residues 43–53 (SNKRLRTPANY) are cytoplasmic. The helical transmembrane segment at 54 to 74 (FIMNLAASDFLMSATQAPICF) threads the bilayer. The Extracellular portion of the chain corresponds to 75–90 (LNSMHTEWILGDIGCN). Cysteines 89 and 167 form a disulfide. A helical membrane pass occupies residues 91–111 (FYVFCGALFGITSMMTLLAIS). Topologically, residues 112–134 (VDRYCVITKPLQSIKRSSKKRSC) are cytoplasmic. Residues 135 to 155 (IIIAFVWLYSLGWSVCPLFGW) traverse the membrane as a helical segment. Topologically, residues 156–187 (SSYIPEGLMISCTWDYVSYSPANRSYTMMLCC) are extracellular. N-linked (GlcNAc...) asparagine glycosylation is present at Asn178. A helical transmembrane segment spans residues 188–208 (FVFFIPLIIIFHCYLFMFLAI). The Cytoplasmic portion of the chain corresponds to 209–240 (RSTGRNVQKLGSTYNRKSNVSQSVKSEWKLAK). A helical transmembrane segment spans residues 241–261 (IAFVAIVVFVLSWSPYACVTL). The Extracellular segment spans residues 262–276 (IAWAGYAKTLNPYSK). The helical transmembrane segment at 277–297 (SVPAVIAKASAIYNPIIYAII) threads the bilayer. Residue Lys284 is modified to N6-(retinylidene)lysine. Topologically, residues 298 to 475 (HPRYRRTIRS…EQHQMEASSH (178 aa)) are cytoplasmic. Disordered regions lie at residues 370 to 390 (VEAA…KQAE) and 445 to 475 (PFGL…ASSH). Residues 375–384 (KKQQPHRSRS) show a composition bias toward basic residues. Residues 445–454 (PFGLNSSSTE) are compositionally biased toward polar residues. Over residues 455–464 (ENADTSDMEV) the composition is skewed to acidic residues. Over residues 465–475 (QEQHQMEASSH) the composition is skewed to basic and acidic residues.

Belongs to the G-protein coupled receptor 1 family. Opsin subfamily. In terms of tissue distribution, highest level in the lateral eye. Low level in the brain.

The protein resides in the cell membrane. Photoreceptor implicated in non-image-forming responses to light. May be able to isomerize covalently bound all-trans retinal back to 11-cis retinal. The polypeptide is Melanopsin (OPN4) (Podarcis siculus (Italian wall lizard)).